The chain runs to 520 residues: GMP synthase [glutamine-hydrolyzing] (520 aa).

The 193-residue stretch at 13 to 205 (KIIVLDYGSQ…ALNICKAKGD (193 aa)) folds into the Glutamine amidotransferase type-1 domain. Cysteine 90 functions as the Nucleophile in the catalytic mechanism. Catalysis depends on residues histidine 179 and glutamate 181. The GMPS ATP-PPase domain maps to 206–395 (WSMDNFIDMQ…LGMPDHIVWR (190 aa)). 233–239 (SGGVDSS) is an ATP binding site.

Homodimer.

It carries out the reaction XMP + L-glutamine + ATP + H2O = GMP + L-glutamate + AMP + diphosphate + 2 H(+). It functions in the pathway purine metabolism; GMP biosynthesis; GMP from XMP (L-Gln route): step 1/1. Functionally, catalyzes the synthesis of GMP from XMP. The protein is GMP synthase [glutamine-hydrolyzing] of Streptococcus pneumoniae (strain CGSP14).